The primary structure comprises 360 residues: Cyclin-D1-binding protein 1 (360 aa).

At alanine 2 the chain carries N-acetylalanine. 2 interaction with TCF3 regions span residues 2–184 (ASAT…VDFV) and 150–360 (ISYN…ELEL). Interaction with RPLP0 regions lie at residues 2–190 (ASAT…AHEE) and 240–360 (LIIP…ELEL). The segment at 2 to 208 (ASATAPAAAV…DPYSGLLNDT (207 aa)) is required for interaction with CCND1.

This sequence belongs to the CCNDBP1 family. Interacts with CCND1 and GRAP2. May also interact with COPS5, RPLP0, SIRT6, SYF2 and TCF3. Phosphorylated. In terms of tissue distribution, ubiquitously expressed. Expression is down-regulated in a variety of tumor types including breast, colon, prostate and rectal tumors, and is up-regulated in certain hepatic carcinomas.

Its subcellular location is the cytoplasm. The protein resides in the nucleus. Functionally, may negatively regulate cell cycle progression. May act at least in part via inhibition of the cyclin-D1/CDK4 complex, thereby preventing phosphorylation of RB1 and blocking E2F-dependent transcription. The protein is Cyclin-D1-binding protein 1 (CCNDBP1) of Homo sapiens (Human).